A 1093-amino-acid chain; its full sequence is Semaphorin 5c (1093 aa).

The N-terminal stretch at 1-34 is a signal peptide; the sequence is MNMLILKLPKMFSQLWLLLILSLLTLEGPQPSTG. Residue Asn-48 is glycosylated (N-linked (GlcNAc...) asparagine). The Sema domain maps to 50-495; that stretch reads SRYISYQDLM…TDLALTRIPA (446 aa). Intrachain disulfides connect Cys-118-Cys-128 and Cys-146-Cys-155. Residues Asn-162, Asn-182, Asn-285, and Asn-295 are each glycosylated (N-linked (GlcNAc...) asparagine). 2 cysteine pairs are disulfide-bonded: Cys-271/Cys-376 and Cys-296/Cys-338. The N-linked (GlcNAc...) asparagine glycan is linked to Asn-341. The region spanning 497-546 is the PSI domain; it reads HCSRHVSQSSCLNSMDPYCGWNELVERCMPQPQDSSVLQHWHQAPQITCP. TSP type-1 domains are found at residues 553-605, 607-663, and 671-726; these read DGGW…TNCT, HGGW…PPCP, and DGGW…QSCQ. Asn-603 carries an N-linked (GlcNAc...) asparagine glycan. 6 cysteine pairs are disulfide-bonded: Cys-619–Cys-656, Cys-623–Cys-662, Cys-634–Cys-646, Cys-683–Cys-720, Cys-687–Cys-725, and Cys-698–Cys-710. The N-linked (GlcNAc...) asparagine glycan is linked to Asn-745. 3 consecutive TSP type-1 domains span residues 794-834, 850-901, and 904-953; these read DSAD…HACP, HGEW…VPCE, and LGWS…NECE. 3 disulfide bridges follow: Cys-862–Cys-895, Cys-866–Cys-900, and Cys-877–Cys-885. Residues 960 to 980 traverse the membrane as a helical segment; that stretch reads TATLPIVIFVGLLFTVACCLA. N-linked (GlcNAc...) asparagine glycans are attached at residues Asn-998 and Asn-1046. The interval 1018–1056 is disordered; the sequence is PTKDYYDQRPKRQSSFRMPAKTSNLGNGNGTLNRNNMHQ. Residues 1041-1053 show a composition bias toward low complexity; the sequence is NLGNGNGTLNRNN.

The protein belongs to the semaphorin family. In egg chambers, high levels of expression in the follicle cells, with little to no expression in the germ cells (at protein level). In stage 3 to 7 egg chambers, planar polarized at the basal epithelial surface (at protein level).

Its subcellular location is the apical cell membrane. It localises to the lateral cell membrane. The protein localises to the endosome. Functionally, regulates the motility of migrating epithelial cells by providing guidance cues within the migratory environment and may also play a role in development of the olfactory system. May act as a positive axonal guidance cue. Function in neurons is essential for adult survival and is important for climbing behavior. Promotes collective migration of follicular epithelial cells in egg chambers, likely by acting at the leading edge of the basal epithelium cells to provide guidance cues across the cell boundary to the trailing edge of the cell ahead. The transmembrane receptor PlexA on the trailing edge of the cell ahead, appears to transduce this signal to suppress the formation of protrusions. Involved in olfactory avoidance behavior. This is Semaphorin 5c from Drosophila melanogaster (Fruit fly).